The primary structure comprises 1379 residues: DNA-directed RNA polymerase subunit beta (1379 aa).

The protein belongs to the RNA polymerase beta chain family. The RNAP catalytic core consists of 2 alpha, 1 beta, 1 beta' and 1 omega subunit. When a sigma factor is associated with the core the holoenzyme is formed, which can initiate transcription.

It carries out the reaction RNA(n) + a ribonucleoside 5'-triphosphate = RNA(n+1) + diphosphate. Its function is as follows. DNA-dependent RNA polymerase catalyzes the transcription of DNA into RNA using the four ribonucleoside triphosphates as substrates. The sequence is that of DNA-directed RNA polymerase subunit beta from Ruegeria sp. (strain TM1040) (Silicibacter sp.).